The sequence spans 1305 residues: Nonribosomal peptide synthetase hkm11 (1305 aa).

Residues 278-672 (TYGELDRWAK…GEIEHHLRPK (395 aa)) are adenylation. The Carrier domain occupies 788–864 (APTTEQEALL…SLASRMRQYN (77 aa)). Ser825 is subject to O-(pantetheine 4'-phosphoryl)serine. A condensation region spans residues 926–1166 (KGQLDRHQLQ…LCLNITAVRV (241 aa)).

The protein belongs to the NRP synthetase family.

It catalyses the reaction hancockiamide D + (E)-cinnamate + ATP = hancockiamide A + AMP + diphosphate. It carries out the reaction hancockiamide H + (E)-cinnamate + ATP = hancockiamide G + AMP + diphosphate. It participates in secondary metabolite biosynthesis. Functionally, nonribosomal peptide synthetase; part of the gene cluster that mediates the biosynthesis of hancockiamides, an unusual new family of N-cinnamoylated piperazines. The NRPS hkm10 and the NmrA-like reductase hkm9 are proposed to convert two molecules of L-Phe to the intermediary piperazine called xenocockiamide A. Xenocockiamide A is then converted to hancockiamide D via a series of hydroxylations and O-methylations. The tyrosinase hkm6 may catalyze an aromatic hydroxylation, then the 2-oxoglutarate-dependent Fe(II) dioxygenase hkm4 and the FAD-dependent phenol hydroxylase hkm7 may catalyze consecutive hydroxylations to install 2 more hydroxy groups, and the methyltransferase hkm8 probably catalyzes two methylations using 2 molecules of S-adenosyl-L-methionine (SAM). The NRPS hkm11 activates and transfers trans-cinnamate supplied by the PAL hkm12 to hancockiamide D and produces hancockiamide A. NRPS Hkm11 has the flexibility to tolerate the bulky hancockiamide G as a substrate and the absence of the acetyl-transferase hkm3 opens up the opportunity for hkm11 to introduce a second N-cinnamoyl moiety. The cytochrome P450 monooxygenase hkm5 catalyzes the methylenedioxy bridge formation, converting hancockiamide A into hancockiamide G. Hkm5 can also convert hancockiamide B into hancockiamide C, and hancockiamide D into hancockiamide H. The N-acetyltransferase hkm3 finally transfers an acetyl group to 1-N of piperazine, converting hancockiamide A into hancockiamide B and hancockiamide G into hancockiamide C. This is Nonribosomal peptide synthetase hkm11 from Aspergillus hancockii.